A 120-amino-acid chain; its full sequence is Large ribosomal subunit protein bL19 (120 aa).

It belongs to the bacterial ribosomal protein bL19 family.

Functionally, this protein is located at the 30S-50S ribosomal subunit interface and may play a role in the structure and function of the aminoacyl-tRNA binding site. The polypeptide is Large ribosomal subunit protein bL19 (Kocuria rhizophila (strain ATCC 9341 / DSM 348 / NBRC 103217 / DC2201)).